A 947-amino-acid chain; its full sequence is MLDKLLRLGEGRMVKRLKKVADYVNTLSDDVEKLSDAELRAKTDEFRKRIDGGEDLDDLLPEAFAVAREAAWRVLSQRHFDVQVMGGAALHFGNVAEMKTGEGKTLTCVLPAYLNALSGKGVHVVTVNDYLAKRDAEWMGRVHRFLGLDVGVILSGLTPDERRAAYHADITYGTNNEFGFDYLRDNMAHRLEDRVQRGHNFAVVDEVDSILIDEARTPLIISGPADAASNWYSEFARLAPLMEKDVHYEVDLRKRTVGVHEVGVEFVEDQLGIENLYEAANSPLVSYLNNALKAKELFQRDKDYIVRNGEVLIVDEFTGRVLLGRRYNEGMHQAIEAKEHVEIKAENQTLATITLQNYFRLYDKLAGMTGTAQTEAAELHEIYKLGVVPIPTNRDMIRQDQTDLIYKTEEAKFIAVVDDVYERYEKGQPVLIGTTSVERSEYLSKQFTKRKIPHNVLNAKYHEQEANIIAEAGRLGAITVATNMAGRGTDIVLGGNVDFLADKRLREQGLDPVETPEEYEAAWESTLNQIKAEAEEEADDVRAVGGLYVLGTERHESRRIDNQLRGRSGRQGDPGESRFYLSLGDELMRRFNGATLEALLTRLNLPDDVPIEAKMVTRAIKSAQTQVEQQNFEVRKNVLKYDEVMNQQRKVIYEERRRILEGEDLAEQAHKMLVDVVTAYVNGATAEGYAEDWDLEQLWTALKQLYPVGIDYHDLVDSDAVGEAGELTREELLDMLIKDAERAYAERERELEELAGEGAMRQLERNVLLNVIDRKWREHLYEMDYLKEGIGLRAMAQRDPLVEYQREGYDMFVGMLEALKEESVGFLFNVTVEAAPAAPSNRVAPVAAPPGLSEFAAAAAKAQEQTGQGAVATKERETPAPTLRAKGIDNDDTPPLTYVGPGEDGSAEVQRSNGGPRHAAPGGATRRERREAARKQAKTSKPTRRRG.

ATP contacts are provided by residues Gln83, 101–105, and Asp490; that span reads GEGKT. Positions 860 to 947 are disordered; sequence AKAQEQTGQG…KTSKPTRRRG (88 aa). Basic and acidic residues predominate over residues 925–934; sequence TRRERREAAR. Basic residues predominate over residues 935–947; sequence KQAKTSKPTRRRG.

This sequence belongs to the SecA family. Monomer and homodimer. Part of the essential Sec protein translocation apparatus which comprises SecA, SecYEG and auxiliary proteins SecDF. Other proteins may also be involved.

The protein resides in the cell membrane. It is found in the cytoplasm. The enzyme catalyses ATP + H2O + cellular proteinSide 1 = ADP + phosphate + cellular proteinSide 2.. Part of the Sec protein translocase complex. Interacts with the SecYEG preprotein conducting channel. Has a central role in coupling the hydrolysis of ATP to the transfer of proteins into and across the cell membrane, serving as an ATP-driven molecular motor driving the stepwise translocation of polypeptide chains across the membrane. The sequence is that of Protein translocase subunit SecA 1 from Mycobacterium sp. (strain KMS).